A 128-amino-acid polypeptide reads, in one-letter code: Small ribosomal subunit protein uS11 (128 aa).

It belongs to the universal ribosomal protein uS11 family. As to quaternary structure, part of the 30S ribosomal subunit. Interacts with proteins S7 and S18. Binds to IF-3.

Located on the platform of the 30S subunit, it bridges several disparate RNA helices of the 16S rRNA. Forms part of the Shine-Dalgarno cleft in the 70S ribosome. This Synechococcus sp. (strain JA-3-3Ab) (Cyanobacteria bacterium Yellowstone A-Prime) protein is Small ribosomal subunit protein uS11.